Here is a 199-residue protein sequence, read N- to C-terminus: GTP-binding protein Di-Ras2 (199 aa).

GTP contacts are provided by residues 14–21 (GAGGVGKS), 33–39 (RESYIPT), 61–65 (DTTGS), and 121–124 (NKCD). Phosphoserine is present on Ser-35. An Effector region motif is present at residues 36 to 44 (YIPTVEDTY). Phosphoserine is present on Ser-126. 152-153 (AK) is a GTP binding site. Cys-196 is subject to Cysteine methyl ester. A lipid anchor (S-geranylgeranyl cysteine) is attached at Cys-196. Residues 197-199 (VVM) constitute a propeptide, removed in mature form.

The protein belongs to the small GTPase superfamily. Di-Ras family. Ubiquitinated by the ECS(ASB11) complex via 'Lys-11'-linked ubiquitin chains, leading to its degradation by the proteasome.

The protein localises to the cell membrane. It catalyses the reaction GTP + H2O = GDP + phosphate + H(+). Displays low GTPase activity and exists predominantly in the GTP-bound form. The protein is GTP-binding protein Di-Ras2 (Diras2) of Mus musculus (Mouse).